A 222-amino-acid polypeptide reads, in one-letter code: MSAVINKEVLLSKIKEALRNGKPRRFRQSVELIVVLRDVDLNKPENRINLLVELPHPPKPNKVAAFAHGAFETQAKNAGVDAIITRDQIESLAGNKRAIRKLAKQYDFFIAPPDLMPLLGRVIGPIFGPRGKMPEVAPPNVDIKALVERLKRSVRVRLRNEAVVKVRVGSETQKPEEILENILVILEELNRRFPLRQHLRGIYIKKTMGPPVVARALEVLVR.

The protein belongs to the universal ribosomal protein uL1 family. As to quaternary structure, part of the 50S ribosomal subunit.

In terms of biological role, binds directly to 23S rRNA. Probably involved in E site tRNA release. Its function is as follows. Protein L1 is also a translational repressor protein, it controls the translation of its operon by binding to its mRNA. This Pyrobaculum islandicum (strain DSM 4184 / JCM 9189 / GEO3) protein is Large ribosomal subunit protein uL1.